Here is a 400-residue protein sequence, read N- to C-terminus: Spaetzle-processing enzyme (400 aa).

A signal peptide spans 1–27 (MASTERNFLLLSLVVSALSGLVHRSDA). The region spanning 34–94 (SCTPQQSDER…GLVNRILVCC (61 aa)) is the Clip domain. 6 cysteine pairs are disulfide-bonded: Cys35–Cys93, Cys46–Cys77, Cys52–Cys94, Cys127–Cys269, Cys166–Cys182, and Cys211–Cys221. The region spanning 135 to 399 (IFGGTNTTLW…FIDWIKQKLE (265 aa)) is the Peptidase S1 domain. A glycan (N-linked (GlcNAc...) asparagine) is linked at Asn140. His181 (charge relay system) is an active-site residue. Positions 202, 204, 207, and 210 each coordinate Ca(2+). Residue Asp249 is the Charge relay system of the active site. N-linked (GlcNAc...) asparagine glycosylation occurs at Asn311. 2 disulfides stabilise this stretch: Cys315–Cys332 and Cys342–Cys375. Residue Ser346 is the Charge relay system of the active site.

The protein belongs to the peptidase S1 family. CLIP subfamily. As to quaternary structure, in the active form, heterodimer of a light chain and a heavy chain; disulfide-linked. Post-translationally, proteolytically cleaved in response to Gram-negative bacterial or fungal infection; processing is likely to result in its activation. Cleavage produces a light chain containing the CLIP domain and a catalytic heavy chain which remain covalently associated through an interchain disulfide bond.

The protein resides in the secreted. Endopeptidase which plays a key role in innate immunity by cleaving Tl ligand spz and thereby activating the Toll pathway in response to fungal and Gram-positive bacterial infections. Acts downstream of pathogen recognition receptors PGRP-SA and GNBP1 and protease grass in response to Gram-positive bacterial infection. Acts downstream of protease psh in response to fungal infection. This chain is Spaetzle-processing enzyme, found in Drosophila melanogaster (Fruit fly).